An 85-amino-acid chain; its full sequence is MAKGQTLQDPFLNALRRERIPVSIYLVNGIKLQGQIESFDQFVVLLKNTVSQMVYKHAISTVVPARIPQNYLPQQAGEDMAEIED.

The 60-residue stretch at 9–68 folds into the Sm domain; the sequence is DPFLNALRRERIPVSIYLVNGIKLQGQIESFDQFVVLLKNTVSQMVYKHAISTVVPARIP.

It belongs to the Hfq family. Homohexamer.

In terms of biological role, RNA chaperone that binds small regulatory RNA (sRNAs) and mRNAs to facilitate mRNA translational regulation in response to envelope stress, environmental stress and changes in metabolite concentrations. Also binds with high specificity to tRNAs. In Idiomarina loihiensis (strain ATCC BAA-735 / DSM 15497 / L2-TR), this protein is RNA-binding protein Hfq.